A 2212-amino-acid polypeptide reads, in one-letter code: RNA-directed RNA polymerase L (2212 aa).

Residues 30–288 form an endonuclease region; sequence KDALLSQVHP…SHEENDSLDC (259 aa). Mn(2+) is bound by residues Glu55, Asp93, and Glu106. Residue Lys119 is part of the active site. The segment at 922-942 is disordered; sequence MKSSDAREERLQDPKRNEKNA. Residues 923–942 are compositionally biased toward basic and acidic residues; the sequence is KSSDAREERLQDPKRNEKNA. Residues 1175 to 1371 form the RdRp catalytic domain; it reads CDMKMAVNNG…YLSSKLNKFV (197 aa). Position 1333 (Asp1333) interacts with Mg(2+).

It belongs to the Bunyavirales RNA polymerase family. Homomultimer; the oligomeric structure is essential for the polymerase activity. Interacts with nucleoprotein N. Interacts with protein Z; this interaction inhibits viral transcription and replication, Z partially blocks the product exit tunnel for the releasing nascent RNA product. Requires Mn(2+) as cofactor. Mg(2+) is required as a cofactor.

Its subcellular location is the virion. It localises to the host cytoplasm. It carries out the reaction RNA(n) + a ribonucleoside 5'-triphosphate = RNA(n+1) + diphosphate. Its function is as follows. RNA-dependent RNA polymerase, which is responsible for the replication and transcription of the viral RNA genome using antigenomic RNA as an intermediate. During transcription, synthesizes subgenomic RNAs and assures their capping by a cap-snatching mechanism, which involves the endonuclease activity cleaving the host capped pre-mRNAs. These short capped RNAs are then used as primers for viral transcription. The 3'-end of subgenomic mRNAs molecules are heterogeneous and not polyadenylated. The replicase function is to direct synthesis of antigenomic and genomic RNA which are encapsidated and non capped. As a consequence of the use of the same enzyme for both transcription and replication, these mechanisms need to be well coordinated. These processes may be regulated by proteins N and Z in a dose-dependent manner. Z protein inhibits the viral polymerase L und thus the viral transcription and RNA synthesis. This Sabia mammarenavirus (isolate Human/Brasil/SPH114202/1990) (SABV) protein is RNA-directed RNA polymerase L.